Here is a 200-residue protein sequence, read N- to C-terminus: Recombination protein RecR (200 aa).

The C4-type zinc-finger motif lies at 59-74 (CSVCFHLSADPVCDIC). Positions 82–176 (TVICVVADSR…RVTRIAFGLP (95 aa)) constitute a Toprim domain.

The protein belongs to the RecR family.

In terms of biological role, may play a role in DNA repair. It seems to be involved in an RecBC-independent recombinational process of DNA repair. It may act with RecF and RecO. In Acaryochloris marina (strain MBIC 11017), this protein is Recombination protein RecR.